Consider the following 157-residue polypeptide: Nascent polypeptide-associated complex subunit beta-1 (157 aa).

Disordered stretches follow at residues lysine 19–threonine 42 and glutamate 126–glutamate 157. In terms of domain architecture, NAC-A/B spans asparagine 38–phenylalanine 103. Basic and acidic residues predominate over residues glutamate 126–alanine 142. Threonine 151 is subject to Phosphothreonine.

This sequence belongs to the NAC-beta family. Part of the nascent polypeptide-associated complex (NAC), consisting of EGD2 and either EGD1 or BTT1. NAC associates with ribosomes via EGD1 or BTT1, and with the CCR4-NOT complex.

It localises to the cytoplasm. Its subcellular location is the nucleus. Functionally, component of the nascent polypeptide-associated complex (NAC), a dynamic component of the ribosomal exit tunnel, protecting the emerging polypeptides from interaction with other cytoplasmic proteins to ensure appropriate nascent protein targeting. The NAC complex also promotes mitochondrial protein import by enhancing productive ribosome interactions with the outer mitochondrial membrane and blocks the inappropriate interaction of ribosomes translating non-secretory nascent polypeptides with translocation sites in the membrane of the endoplasmic reticulum. EGD1 may act as a transcription factor that exert a negative effect on the expression of several genes that are transcribed by RNA polymerase II. The protein is Nascent polypeptide-associated complex subunit beta-1 (EGD1) of Saccharomyces cerevisiae (strain YJM789) (Baker's yeast).